Reading from the N-terminus, the 400-residue chain is Ribosomal RNA large subunit methyltransferase I (400 aa).

Residues 6–84 (FPRLVLAKGR…NEAIDSAFFE (79 aa)) enclose the PUA domain.

The protein belongs to the methyltransferase superfamily. RlmI family.

Its subcellular location is the cytoplasm. The catalysed reaction is cytidine(1962) in 23S rRNA + S-adenosyl-L-methionine = 5-methylcytidine(1962) in 23S rRNA + S-adenosyl-L-homocysteine + H(+). Functionally, specifically methylates the cytosine at position 1962 (m5C1962) of 23S rRNA. This chain is Ribosomal RNA large subunit methyltransferase I, found in Klebsiella pneumoniae (strain 342).